Here is a 512-residue protein sequence, read N- to C-terminus: Cytochrome P450 26B1 (512 aa).

A heme-binding site is contributed by C441.

Belongs to the cytochrome P450 family. The cofactor is heme.

The protein resides in the endoplasmic reticulum membrane. It is found in the microsome membrane. The enzyme catalyses all-trans-retinoate + reduced [NADPH--hemoprotein reductase] + O2 = all-trans-4-hydroxyretinoate + oxidized [NADPH--hemoprotein reductase] + H2O + H(+). It catalyses the reaction all-trans-retinoate + reduced [NADPH--hemoprotein reductase] + O2 = all-trans-18-hydroxyretinoate + oxidized [NADPH--hemoprotein reductase] + H2O + H(+). Its function is as follows. A cytochrome P450 monooxygenase involved in the metabolism of retinoates (RAs), the active metabolites of vitamin A, and critical signaling molecules in animals. RAs exist as at least four different isomers: all-trans-RA (atRA), 9-cis-RA, 13-cis-RA, and 9,13-dicis-RA, where atRA is considered to be the biologically active isomer, although 9-cis-RA and 13-cis-RA also have activity. Catalyzes the hydroxylation of atRA primarily at C-4 and C-18, thereby contributing to the regulation of atRA homeostasis and signaling. Hydroxylation of atRA limits its biological activity and initiates a degradative process leading to its eventual elimination. Involved in the convertion of atRA to all-trans-4-oxo-RA. Can oxidize all-trans-13,14-dihydroretinoate (DRA) to metabolites which could include all-trans-4-oxo-DRA, all-trans-4-hydroxy-DRA, all-trans-5,8-epoxy-DRA, and all-trans-18-hydroxy-DRA. Shows preference for the following substrates: atRA &gt; 9-cis-RA &gt; 13-cis-RA. Plays a central role in germ cell development: acts by degrading RAs in the developing testis, preventing STRA8 expression, thereby leading to delay of meiosis. Required for the maintenance of the undifferentiated state of male germ cells during embryonic development in Sertoli cells, inducing arrest in G0 phase of the cell cycle and preventing meiotic entry. Plays a role in skeletal development, both at the level of patterning and in the ossification of bone and the establishment of some synovial joints. Essential for postnatal survival. Also has a significant activity in oxidation of tazarotenic acid and may therefore metabolize that xenobiotic in vivo. This Rattus norvegicus (Rat) protein is Cytochrome P450 26B1 (Cyp26b1).